The chain runs to 277 residues: Thymidylate synthase (277 aa).

Residue R21 coordinates dUMP. H51 contacts (6R)-5,10-methylene-5,6,7,8-tetrahydrofolate. 126–127 (RR) contacts dUMP. C159 functions as the Nucleophile in the catalytic mechanism. DUMP contacts are provided by residues 179 to 182 (RSAD), N190, and 220 to 222 (HLY). D182 contributes to the (6R)-5,10-methylene-5,6,7,8-tetrahydrofolate binding site. S276 serves as a coordination point for (6R)-5,10-methylene-5,6,7,8-tetrahydrofolate.

The protein belongs to the thymidylate synthase family. Bacterial-type ThyA subfamily. In terms of assembly, homodimer.

The protein localises to the cytoplasm. The enzyme catalyses dUMP + (6R)-5,10-methylene-5,6,7,8-tetrahydrofolate = 7,8-dihydrofolate + dTMP. It functions in the pathway pyrimidine metabolism; dTTP biosynthesis. Its function is as follows. Catalyzes the reductive methylation of 2'-deoxyuridine-5'-monophosphate (dUMP) to 2'-deoxythymidine-5'-monophosphate (dTMP) while utilizing 5,10-methylenetetrahydrofolate (mTHF) as the methyl donor and reductant in the reaction, yielding dihydrofolate (DHF) as a by-product. This enzymatic reaction provides an intracellular de novo source of dTMP, an essential precursor for DNA biosynthesis. The sequence is that of Thymidylate synthase from Hydrogenovibrio crunogenus (strain DSM 25203 / XCL-2) (Thiomicrospira crunogena).